The chain runs to 84 residues: Large ribosomal subunit protein bL27 (84 aa).

Residues 1–22 form a disordered region; sequence MAHKKAGGSTRNGRDSESKRLG.

This sequence belongs to the bacterial ribosomal protein bL27 family.

This is Large ribosomal subunit protein bL27 from Shewanella baltica (strain OS223).